Here is a 1082-residue protein sequence, read N- to C-terminus: Error-prone DNA polymerase (1082 aa).

Belongs to the DNA polymerase type-C family. DnaE2 subfamily.

The protein localises to the cytoplasm. It carries out the reaction DNA(n) + a 2'-deoxyribonucleoside 5'-triphosphate = DNA(n+1) + diphosphate. In terms of biological role, DNA polymerase involved in damage-induced mutagenesis and translesion synthesis (TLS). It is not the major replicative DNA polymerase. This chain is Error-prone DNA polymerase, found in Xanthomonas campestris pv. campestris (strain B100).